Reading from the N-terminus, the 374-residue chain is Homeobox protein knotted-1-like 13 (374 aa).

The tract at residues 214 to 242 is disordered; sequence TGASPGEGTGATMSDGEDDQADSEANMYD. The ELK domain maps to 270 to 290; it reads ELKHELKQGYKEKLIDIREEI. A DNA-binding region (homeobox; TALE-type) is located at residues 291 to 354; sequence LRKRRAGKLP…NQRKRNWHSN (64 aa). Residues 347 to 374 form a disordered region; sequence RKRNWHSNPSSSTSVKTKRKSNAGDNNS.

Belongs to the TALE/KNOX homeobox family. As to expression, isoforms 1 and 2 are expressed in roots, stems, shoot meristem, leaf blades, leaf sheaths and flowers. Isoform 3 is expressed in stems, shoot meristem, rachis, leaf blades and leaf sheaths.

It localises to the nucleus. In terms of biological role, isoform 3 acts as a transcription activator, but isoforms 1 and 2 do not. In Oryza sativa subsp. japonica (Rice), this protein is Homeobox protein knotted-1-like 13 (OSH45).